We begin with the raw amino-acid sequence, 468 residues long: Pituitary adenylate cyclase-activating polypeptide type I receptor (468 aa).

An N-terminal signal peptide occupies residues 1-20 (MAGVVHVSLAALLLLPMAPA). Over 21–152 (MHSDCIFKKE…TGDQDYYYLS (132 aa)) the chain is Extracellular. Intrachain disulfides connect Cys-34/Cys-63, Cys-54/Cys-118, and Cys-77/Cys-134. N-linked (GlcNAc...) asparagine glycosylation is found at Asn-48, Asn-60, and Asn-117. The segment at 125-139 (EPFPHYFDACGFDEY) is important for ADCYAP1/PACAP ligand binding and specificity. Residues 153–177 (VKALYTVGYSTSLVTLTTAMVILCR) form a helical membrane-spanning segment. Over 178–187 (FRKLHCTRNF) the chain is Cytoplasmic. A helical membrane pass occupies residues 188–208 (IHMNLFVSFMLRAISVFIKDW). Over 209-223 (ILYAEQDSNHCFIST) the chain is Extracellular. A helical membrane pass occupies residues 224-249 (VECKAVMVFFHYCVVSNYFWLFIEGL). An intrachain disulfide couples Cys-226 to Cys-296. The Cytoplasmic segment spans residues 250 to 267 (YLFTLLVETFFPERRYFY). The helical transmembrane segment at 268 to 290 (WYTIIGWGTPTVCVTVWATLRLY) threads the bilayer. The Extracellular portion of the chain corresponds to 291-302 (FDDTGCWDMNDS). Asn-300 carries N-linked (GlcNAc...) asparagine glycosylation. The helical transmembrane segment at 303-329 (TALWWVIKGPVVGSIMVNFVLFIGIIV) threads the bilayer. The Cytoplasmic portion of the chain corresponds to 330–347 (ILVQKLQSPDMGGNESSI). The helical transmembrane segment at 348–374 (YLRLARSTLLLIPLFGIHYTVFAFSPE) threads the bilayer. The N-linked (GlcNAc...) asparagine glycan is linked to Asn-375. Over 375–379 (NVSKR) the chain is Extracellular. Residues 380-403 (ERLVFELGLGSFQGFVVAVLYCFL) traverse the membrane as a helical segment. Residues 404–468 (NGEVQAEIKR…SGLPADNLAT (65 aa)) lie on the Cytoplasmic side of the membrane. Phosphoserine occurs at positions 434 and 447.

It belongs to the G-protein coupled receptor 2 family. Interacts with maxadilan, a vasodilator peptide from Lutzomyia longipalpis saliva; the interaction results in ADCYAP1R1 activation. Most abundant in the brain, low expression in the lung, liver, thymus, spleen, pancreas and placenta.

Its subcellular location is the cell membrane. With respect to regulation, several synthetic peptides derived from maxadilan, a vasodilator peptide from Lutzomyia longipalpis saliva, act as antagonists for ADCYAP1R1. G protein-coupled receptor activated by the neuropeptide pituitary adenylate cyclase-activating polypeptide (ADCYAP1/PACAP). Binds both PACAP27 and PACAP38 bioactive peptides. Ligand binding causes a conformation change that triggers signaling via guanine nucleotide-binding proteins (G proteins) and modulates the activity of downstream effectors. Activates cAMP-dependent pathway. May regulate the release of adrenocorticotropin, luteinizing hormone, growth hormone, prolactin, epinephrine, and catecholamine. May play a role in spermatogenesis and sperm motility. Causes smooth muscle relaxation and secretion in the gastrointestinal tract. This Homo sapiens (Human) protein is Pituitary adenylate cyclase-activating polypeptide type I receptor.